Consider the following 95-residue polypeptide: Small ribosomal subunit protein uS19 (95 aa).

Belongs to the universal ribosomal protein uS19 family.

Functionally, protein S19 forms a complex with S13 that binds strongly to the 16S ribosomal RNA. The chain is Small ribosomal subunit protein uS19 (rpsS) from Treponema pallidum (strain Nichols).